Here is a 455-residue protein sequence, read N- to C-terminus: Probable glycine dehydrogenase (decarboxylating) subunit 1 (455 aa).

This sequence belongs to the GcvP family. N-terminal subunit subfamily. As to quaternary structure, the glycine cleavage system is composed of four proteins: P, T, L and H. In this organism, the P 'protein' is a heterodimer of two subunits.

The catalysed reaction is N(6)-[(R)-lipoyl]-L-lysyl-[glycine-cleavage complex H protein] + glycine + H(+) = N(6)-[(R)-S(8)-aminomethyldihydrolipoyl]-L-lysyl-[glycine-cleavage complex H protein] + CO2. In terms of biological role, the glycine cleavage system catalyzes the degradation of glycine. The P protein binds the alpha-amino group of glycine through its pyridoxal phosphate cofactor; CO(2) is released and the remaining methylamine moiety is then transferred to the lipoamide cofactor of the H protein. This is Probable glycine dehydrogenase (decarboxylating) subunit 1 from Francisella tularensis subsp. mediasiatica (strain FSC147).